Consider the following 2581-residue polypeptide: Highly reducing polyketide synthase sorA (2581 aa).

The Ketosynthase family 3 (KS3) domain maps to 14–436 (SEPIAIIGMS…GSNAHIILED (423 aa)). Residues C187, H322, and H359 each act as for beta-ketoacyl synthase activity in the active site. The tract at residues 574–868 (VFTGQGAQWN…VVEVGPHTAL (295 aa)) is malonyl-CoA:ACP transacylase (MAT) domain. Positions 966–1103 (HDLLGSIVEG…GLVSVELGES (138 aa)) are N-terminal hotdog fold. The interval 966 to 1270 (HDLLGSIVEG…GFSYQSLGRS (305 aa)) is dehydratase (DH) domain. A PKS/mFAS DH domain is found at 966 to 1273 (HDLLGSIVEG…YQSLGRSTSL (308 aa)). H998 (proton acceptor; for dehydratase activity) is an active-site residue. Residues 1119–1273 (TRRILPADLF…YQSLGRSTSL (155 aa)) form a C-terminal hotdog fold region. The Proton donor; for dehydratase activity role is filled by D1184. The segment at 1461–1568 (LEVGAATGAI…SSLLKPGGTL (108 aa)) is methyltransferase (CMet) domain. Residues 1873–2184 (LKPDLLVFGD…AGDQIGKVVL (312 aa)) form an enoyl reductase (ER)domain region. Residues 2207-2389 (VSYLIVGGSG…AVSIDLSVVN (183 aa)) form a ketoreductase (KR) domain region. The Carrier domain maps to 2497–2574 (DAVRVVGTAI…QLAIDVVDRS (78 aa)). The residue at position 2534 (S2534) is an O-(pantetheine 4'-phosphoryl)serine.

The protein operates within secondary metabolite biosynthesis. Highly reducing polyketide synthase; part of the gene cluster that mediates the biosynthesis of sorbicillinoids, a diverse group of yellow secondary metabolites that restrict growth of competing pathogenic fungi but not of bacteria. Sorbicillinoids biosynthesis requires the action of two PKSs. SorA iteratively combines three acetyl units and the growing chain is modified by the ketoacyl reductase subunit, and optional by the enoyl reductase subunit in the second cycle. The polyketide is then handed over to the PKS SorB, which adds three more acetyl units, and two methyl groups. SorB releases an aldehyde, which undergoes spontaneous cyclization resulting in the formation of sorbicillin or 2',3'-dihydrosorbicillin. The monooxygenase sorC oxidizes sorbicillin and 2',3'-dihydrosorbicillin to 2',3'-dihydrosorbicillinol and sorbicillinol, respectively. The oxidoreductase sorD further converts sorbicillinol into oxosorbicillinol. Sorbicillinol is the building block for the other sorbicillinoids such as disorbicillinol, bisvertinolon, and dihydrobisvertinolone. This Penicillium rubens (strain ATCC 28089 / DSM 1075 / NRRL 1951 / Wisconsin 54-1255) (Penicillium chrysogenum) protein is Highly reducing polyketide synthase sorA.